Here is a 221-residue protein sequence, read N- to C-terminus: MENNDDLMPREKLLASGAKALSDYELLAIFLRTGIKGCPVISLSKNVLTHFGSLHALLSSDKKAFCSVKGLGITQFIQLQAITEMTKRYLKQEMLSTPIINDPETVKLFLLTELQHEEREVFMVLFLDNQHRLIKKERLFLGTINVSAVYPREIIKEALYCNAAALILAHNHPSGVTEPSYSDQLITKKIQDAAELMEICVLDHLIVGKSDCYSFAENCLL.

One can recognise an MPN domain in the interval 99–221; that stretch reads IINDPETVKL…CYSFAENCLL (123 aa). His-170, His-172, and Asp-183 together coordinate Zn(2+). The JAMM motif signature appears at 170–183; that stretch reads HNHPSGVTEPSYSD.

Belongs to the UPF0758 family.

This Haemophilus influenzae (strain PittEE) protein is UPF0758 protein CGSHiEE_07200.